The sequence spans 77 residues: Large ribosomal subunit protein eL20 (77 aa).

The protein belongs to the eukaryotic ribosomal protein eL20 family. As to quaternary structure, part of the 50S ribosomal subunit. Binds 23S rRNA.

In Thermococcus gammatolerans (strain DSM 15229 / JCM 11827 / EJ3), this protein is Large ribosomal subunit protein eL20.